Reading from the N-terminus, the 401-residue chain is ATP-dependent RNA helicase eIF4A (401 aa).

The Q motif motif lies at 28 to 56 (DNFDDMKLKGELLRGIYAYGFERPSAIQQ). Residues 59–229 (IMPIVTGRDC…KKFMRDPIRI (171 aa)) form the Helicase ATP-binding domain. 72 to 79 (AQSGTGKT) lines the ATP pocket. The DEAD box signature appears at 177–180 (DEAD). Positions 240-401 (GIRQFYINVE…EMPLNVADLI (162 aa)) constitute a Helicase C-terminal domain.

This sequence belongs to the DEAD box helicase family. eIF4A subfamily. Component of the eIF4F complex, which composition varies with external and internal environmental conditions. It is composed of at least eIF4A, eIF4E and eIF4G.

It localises to the cytoplasm. The enzyme catalyses ATP + H2O = ADP + phosphate + H(+). Functionally, ATP-dependent RNA helicase which is a subunit of the eIF4F complex involved in cap recognition and is required for mRNA binding to ribosome. In the current model of translation initiation, eIF4A unwinds RNA secondary structures in the 5'-UTR of mRNAs which is necessary to allow efficient binding of the small ribosomal subunit, and subsequent scanning for the initiator codon. The chain is ATP-dependent RNA helicase eIF4A (TIF1) from Cryptococcus neoformans var. neoformans serotype D (strain B-3501A) (Filobasidiella neoformans).